Consider the following 398-residue polypeptide: Protochlorophyllide reductase, chloroplastic (398 aa).

This sequence belongs to the short-chain dehydrogenases/reductases (SDR) family. POR subfamily.

Its subcellular location is the plastid. The protein resides in the chloroplast. The catalysed reaction is chlorophyllide a + NADP(+) = protochlorophyllide a + NADPH + H(+). Its pathway is porphyrin-containing compound metabolism; chlorophyll biosynthesis. Its function is as follows. Phototransformation of protochlorophyllide (Pchlide) to chlorophyllide (Chlide). In Daucus carota (Wild carrot), this protein is Protochlorophyllide reductase, chloroplastic (POR1).